Here is a 459-residue protein sequence, read N- to C-terminus: Chaperone SurA (459 aa).

The first 23 residues, 1-23 (MNHRLVALSVASLALLAPLTVPA), serve as a signal peptide directing secretion. 2 consecutive PpiC domains span residues 197-301 (VQQI…KVLE) and 312-411 (VTQS…QLME).

The protein localises to the periplasm. It carries out the reaction [protein]-peptidylproline (omega=180) = [protein]-peptidylproline (omega=0). Its function is as follows. Chaperone involved in the correct folding and assembly of outer membrane proteins. Recognizes specific patterns of aromatic residues and the orientation of their side chains, which are found more frequently in integral outer membrane proteins. May act in both early periplasmic and late outer membrane-associated steps of protein maturation. The sequence is that of Chaperone SurA from Albidiferax ferrireducens (strain ATCC BAA-621 / DSM 15236 / T118) (Rhodoferax ferrireducens).